We begin with the raw amino-acid sequence, 535 residues long: T-complex protein 1 subunit beta (535 aa).

A2 is subject to N-acetylalanine. At S3 the chain carries Phosphoserine. K13 carries the N6-acetyllysine modification. G44 is a binding site for ADP. G44 contributes to the ATP binding site. Mg(2+) is bound at residue D97. 6 residues coordinate ADP: G98, T99, T100, S101, S168, and S169. 3 residues coordinate ATP: G98, T99, and T100. K181 carries the N6-acetyllysine modification. K248 is covalently cross-linked (Glycyl lysine isopeptide (Lys-Gly) (interchain with G-Cter in SUMO2)). The residue at position 260 (S260) is a Phosphoserine. A Phosphothreonine modification is found at T261. Positions 410, 495, and 500 each coordinate ADP. ATP-binding residues include E495 and K500.

This sequence belongs to the TCP-1 chaperonin family. Component of the chaperonin-containing T-complex (TRiC), a hexadecamer composed of two identical back-to-back stacked rings enclosing a protein folding chamber. Each ring is made up of eight different subunits: TCP1/CCT1, CCT2, CCT3, CCT4, CCT5, CCT6A/CCT6, CCT7, CCT8. Interacts with PACRG. Interacts with FLCN. Interacts with DLEC1. Interacts with SVEP1. Post-translationally, the N-terminus is blocked.

The protein resides in the cytoplasm. The enzyme catalyses ATP + H2O = ADP + phosphate + H(+). In terms of biological role, component of the chaperonin-containing T-complex (TRiC), a molecular chaperone complex that assists the folding of actin, tubulin and other proteins upon ATP hydrolysis. The TRiC complex mediates the folding of WRAP53/TCAB1, thereby regulating telomere maintenance. As part of the TRiC complex may play a role in the assembly of BBSome, a complex involved in ciliogenesis regulating transports vesicles to the cilia. In Mus musculus (Mouse), this protein is T-complex protein 1 subunit beta (Cct2).